A 97-amino-acid polypeptide reads, in one-letter code: UPF0729 protein AAEL015238 (97 aa).

A disordered region spans residues 69–97 (EVAASGSGSNGTATAVGSEGEAEETKKSQ). Residues 74 to 83 (GSGSNGTATA) are compositionally biased toward polar residues.

This sequence belongs to the UPF0729 family.

In Aedes aegypti (Yellowfever mosquito), this protein is UPF0729 protein AAEL015238.